The sequence spans 143 residues: Nucleoside diphosphate kinase (143 aa).

ATP-binding residues include Lys-11, Phe-59, Arg-87, Thr-93, Arg-104, and Asn-114. His-117 (pros-phosphohistidine intermediate) is an active-site residue.

This sequence belongs to the NDK family. As to quaternary structure, homotetramer. Requires Mg(2+) as cofactor.

The protein localises to the cytoplasm. It catalyses the reaction a 2'-deoxyribonucleoside 5'-diphosphate + ATP = a 2'-deoxyribonucleoside 5'-triphosphate + ADP. The enzyme catalyses a ribonucleoside 5'-diphosphate + ATP = a ribonucleoside 5'-triphosphate + ADP. Major role in the synthesis of nucleoside triphosphates other than ATP. The ATP gamma phosphate is transferred to the NDP beta phosphate via a ping-pong mechanism, using a phosphorylated active-site intermediate. The chain is Nucleoside diphosphate kinase from Citrobacter koseri (strain ATCC BAA-895 / CDC 4225-83 / SGSC4696).